A 254-amino-acid polypeptide reads, in one-letter code: Triosephosphate isomerase (254 aa).

12–14 (NWK) contributes to the substrate binding site. The active-site Electrophile is the His-99. The active-site Proton acceptor is Glu-169. Substrate is bound by residues Gly-175, Ser-214, and 235 to 236 (GG).

It belongs to the triosephosphate isomerase family. As to quaternary structure, homodimer.

It is found in the cytoplasm. It carries out the reaction D-glyceraldehyde 3-phosphate = dihydroxyacetone phosphate. It functions in the pathway carbohydrate biosynthesis; gluconeogenesis. It participates in carbohydrate degradation; glycolysis; D-glyceraldehyde 3-phosphate from glycerone phosphate: step 1/1. Its function is as follows. Involved in the gluconeogenesis. Catalyzes stereospecifically the conversion of dihydroxyacetone phosphate (DHAP) to D-glyceraldehyde-3-phosphate (G3P). The sequence is that of Triosephosphate isomerase from Brucella melitensis biotype 1 (strain ATCC 23456 / CCUG 17765 / NCTC 10094 / 16M).